A 947-amino-acid chain; its full sequence is Serine-aspartate repeat-containing protein C (947 aa).

A signal peptide spans 1–50; that stretch reads MNNKKTATNRKGMIPNRLNKFSIRKYSVGTASILVGTTLIFGLSGHEAKA. Residues 51–164 are disordered; the sequence is AEHTNGELNQ…STTPKTTTIK (114 aa). A ligand binding A region region spans residues 51–495; sequence AEHTNGELNQ…GSSTANGDQK (445 aa). Polar residues predominate over residues 56-71; the sequence is GELNQSKNETTAPSEN. Basic and acidic residues predominate over residues 72–83; it reads KTTKKVDSRQLK. The span at 84 to 155 shows a compositional bias: polar residues; that stretch reads DNTQTATADQ…SNLTQAKDVS (72 aa). 2 CNA-B domains span residues 496–606 and 607–717; these read KYNL…YKTP and KYSL…EEET. The disordered stretch occupies residues 678–927; it reads TQTGTNTTED…NNSNNGTLFG (250 aa). 2 stretches are compositionally biased toward acidic residues: residues 685–695 and 712–886; these read TEDDKDADGGE and YYEE…DSDS. The short motif at 910–914 is the LPXTG sorting signal element; that stretch reads LPETG. The span at 912–927 shows a compositional bias: low complexity; it reads ETGSENNNSNNGTLFG. Thr913 carries the pentaglycyl murein peptidoglycan amidated threonine modification. Positions 914-947 are cleaved as a propeptide — removed by sortase; it reads GSENNNSNNGTLFGGLFAALGSLLLFGRRKKQNK.

Belongs to the serine-aspartate repeat-containing protein (SDr) family. As to quaternary structure, homodimerizes; via N2-Domain. Interacts with host NRXN1; this interaction mediates bacterial attachment to host cells.

Its subcellular location is the secreted. It is found in the cell wall. Its function is as follows. Cell surface-associated calcium-binding protein which plays an important role in adhesion and pathogenesis. Mediates interactions with components of the extracellular matrix such as host NRXN1 to promote bacterial adhesion. The protein is Serine-aspartate repeat-containing protein C (sdrC) of Staphylococcus aureus (strain USA300).